The sequence spans 463 residues: Cysteine--tRNA ligase (463 aa).

Residue Cys33 participates in Zn(2+) binding. The short motif at 35 to 45 is the 'HIGH' region element; that stretch reads PTVYDFAHIGN. 3 residues coordinate Zn(2+): Cys221, His246, and Glu250. The 'KMSKS' region signature appears at 279–283; sequence KMSKS. Lys282 is an ATP binding site.

The protein belongs to the class-I aminoacyl-tRNA synthetase family. Monomer. Requires Zn(2+) as cofactor.

Its subcellular location is the cytoplasm. It catalyses the reaction tRNA(Cys) + L-cysteine + ATP = L-cysteinyl-tRNA(Cys) + AMP + diphosphate. The sequence is that of Cysteine--tRNA ligase from Rhizobium johnstonii (strain DSM 114642 / LMG 32736 / 3841) (Rhizobium leguminosarum bv. viciae).